Here is a 445-residue protein sequence, read N- to C-terminus: Reticulon-4 receptor-like 1 (445 aa).

Positions Met1–Gly24 are cleaved as a signal peptide. Residues Cys25–Glu54 enclose the LRRNT domain. LRR repeat units lie at residues Asp55 to Pro76, Ala77 to Gly98, His101 to Gly123, Lys126 to Gly147, Ser150 to Asp171, Asn174 to Gly195, Asn198 to Asp219, and Arg222 to Pro243. Positions Asn255 to Gly306 constitute an LRRCT domain. 2 disordered regions span residues Cys304–Glu380 and Arg401–Gln421. Basic residues-rich tracts occupy residues Gly352–Arg366 and Arg401–Pro413. The GPI-anchor amidated serine moiety is linked to residue Ser424. Residues Ser424–Leu444 traverse the membrane as a helical segment. The propeptide at Ser425–Arg445 is removed in mature form.

It belongs to the Nogo receptor family. As to quaternary structure, identified in a complex that contains RTN4R, RTN4RL1 and NGFR; the interaction depends on the presence of chondroitin sulfate proteoglycans. Does not interact with MAG, OMG and RTN4. In terms of tissue distribution, detected in brain (at protein level). Expressed in various regions of the brain, including the cerebral cortex, hippocampus, striatum, thalamus and cerebellum.

Its subcellular location is the cell membrane. It is found in the membrane raft. The protein localises to the perikaryon. The protein resides in the cell projection. Functionally, cell surface receptor. Plays a functionally redundant role in postnatal brain development and in regulating axon regeneration in the adult central nervous system. Contributes to normal axon migration across the brain midline and normal formation of the corpus callosum. Protects motoneurons against apoptosis; protection against apoptosis is probably mediated by MAG. Plays a role in inhibiting neurite outgrowth and axon regeneration via its binding to neuronal chondroitin sulfate proteoglycans. Binds heparin. Like other family members, plays a role in restricting the number dendritic spines and the number of synapses that are formed during brain development. Signaling mediates activation of Rho and downstream reorganization of the actin cytoskeleton. The protein is Reticulon-4 receptor-like 1 of Rattus norvegicus (Rat).